The chain runs to 947 residues: DEAD-box ATP-dependent RNA helicase 45 (947 aa).

The segment covering 1–14 (MEEEEVVVVVDEEE) has biased composition (acidic residues). Disordered regions lie at residues 1–132 (MEEE…EDEI) and 159–221 (SMPA…EEFM). 2 stretches are compositionally biased toward basic and acidic residues: residues 15–31 (SERR…KRLD) and 42–61 (KEWQ…REQE). The segment covering 62-82 (AAAGAGTPAAAAGADGDSNAG) has biased composition (low complexity). 2 stretches are compositionally biased toward acidic residues: residues 88–108 (DGEE…EDDG) and 196–219 (DDSD…DDEE). Residues 285 to 313 (KTWVQSGLTSKLLDTIKKLGFEKPMPIQA) carry the Q motif motif. The Helicase ATP-binding domain occupies 316-494 (LPIIMSGRDC…RKVLTKPVEI (179 aa)). 329–336 (AKTGSGKT) contributes to the ATP binding site. Positions 442–445 (DEAD) match the DEAD box motif. The 169-residue stretch at 479-647 (QVEILARKVL…AVPQDLKGLA (169 aa)) folds into the Helicase C-terminal domain. Residues 658–710 (TEQAHGTGYGGSGFKFNEEEDEARRSAKKAQAREYGYEEDKSDSDSDEEGGVR) form a disordered region. The segment covering 697-706 (DKSDSDSDEE) has biased composition (acidic residues). The stretch at 854–879 (TELSVKKAKSELKRVLEDCANHALNL) forms a coiled coil.

The protein belongs to the DEAD box helicase family. DDX46/PRP5 subfamily.

The enzyme catalyses ATP + H2O = ADP + phosphate + H(+). The protein is DEAD-box ATP-dependent RNA helicase 45 of Oryza sativa subsp. japonica (Rice).